The chain runs to 299 residues: GTPase Era (299 aa).

Residues 8 to 176 form the Era-type G domain; the sequence is RCGYVAIVGR…EKLVGERLPE (169 aa). Residues 16-23 form a G1 region; the sequence is GRPNVGKS. A GTP-binding site is contributed by 16–23; it reads GRPNVGKS. Residues 42–46 are G2; that stretch reads QTTRH. Residues 63-66 form a G3 region; it reads DTPG. GTP is bound by residues 63 to 67 and 125 to 128; these read DTPGL and NKAD. The G4 stretch occupies residues 125–128; it reads NKAD. The G5 stretch occupies residues 155 to 157; sequence ISA. In terms of domain architecture, KH type-2 spans 199 to 283; that stretch reads IREKIMRQLG…MLNLWVKVKG (85 aa).

It belongs to the TRAFAC class TrmE-Era-EngA-EngB-Septin-like GTPase superfamily. Era GTPase family. Monomer.

Its subcellular location is the cytoplasm. The protein resides in the cell inner membrane. In terms of biological role, an essential GTPase that binds both GDP and GTP, with rapid nucleotide exchange. Plays a role in 16S rRNA processing and 30S ribosomal subunit biogenesis and possibly also in cell cycle regulation and energy metabolism. This is GTPase Era from Ectopseudomonas mendocina (strain ymp) (Pseudomonas mendocina).